We begin with the raw amino-acid sequence, 265 residues long: RING finger protein 208 (265 aa).

The tract at residues 83-106 is disordered; sequence MPTLEGASHTPPLPRRPRKGSSEL. Serine 103 is modified (phosphoserine). Residues 147-194 form an RING-type zinc finger; that stretch reads CPTCGHTYNVTQRRPRVLSCLHSVCEQCLQILYESCPKYKFISCPTCH.

In Mus musculus (Mouse), this protein is RING finger protein 208 (Rnf208).